Reading from the N-terminus, the 695-residue chain is N-terminal acetyltransferase A complex subunit-like protein C418.02 (695 aa).

TPR repeat units lie at residues 8-41 (EAFL…KPKH), 43-75 (DSVA…DPKS), 76-109 (QFCW…SPNN), 111-143 (SLWY…DSSN), 145-177 (EYRL…CNLS), 217-250 (FNFE…FPNR), 262-296 (WNFY…GISV), 365-398 (LWCT…TPTY), 399-432 (PELF…DKSD), and 477-510 (VWFL…YKKW).

In terms of assembly, component of the N-terminal acetyltransferase A (NatA) complex.

Its subcellular location is the cytoplasm. It localises to the nucleus. Functionally, non-catalytic component of the NatA N-terminal acetyltransferase, which catalyzes acetylation of proteins beginning with Met-Ser, Met-Gly and Met-Ala. N-acetylation plays a role in normal eukaryotic translation and processing, protect against proteolytic degradation and protein turnover. The polypeptide is N-terminal acetyltransferase A complex subunit-like protein C418.02 (Schizosaccharomyces pombe (strain 972 / ATCC 24843) (Fission yeast)).